The primary structure comprises 501 residues: Glycerol kinase (501 aa).

Threonine 16 serves as a coordination point for ADP. The ATP site is built by threonine 16, threonine 17, and serine 18. Position 16 (threonine 16) interacts with sn-glycerol 3-phosphate. Arginine 20 lines the ADP pocket. Residues arginine 84, glutamate 85, tyrosine 135, and aspartate 242 each contribute to the sn-glycerol 3-phosphate site. Glycerol is bound by residues arginine 84, glutamate 85, tyrosine 135, aspartate 242, and glutamine 243. ADP is bound by residues threonine 264 and glycine 307. Threonine 264, glycine 307, glutamine 311, and glycine 408 together coordinate ATP. Glycine 408 is a binding site for ADP.

It belongs to the FGGY kinase family.

The catalysed reaction is glycerol + ATP = sn-glycerol 3-phosphate + ADP + H(+). Its pathway is polyol metabolism; glycerol degradation via glycerol kinase pathway; sn-glycerol 3-phosphate from glycerol: step 1/1. Its function is as follows. Key enzyme in the regulation of glycerol uptake and metabolism. Catalyzes the phosphorylation of glycerol to yield sn-glycerol 3-phosphate. This is Glycerol kinase from Saccharolobus islandicus (strain L.S.2.15 / Lassen #1) (Sulfolobus islandicus).